We begin with the raw amino-acid sequence, 500 residues long: 4-aminobutyrate aminotransferase, mitochondrial (500 aa).

A mitochondrion-targeting transit peptide spans 1 to 28; it reads MASMLLAQRLACSFQHSYRLLVPGSRHI. [2Fe-2S] cluster is bound at residue C163. 164–165 is a pyridoxal 5'-phosphate binding site; that stretch reads GS. Position 166 (C166) interacts with [2Fe-2S] cluster. R220 is a binding site for substrate. K231 carries the post-translational modification N6-succinyllysine. Position 252 is an N6-acetyllysine; alternate (K252). The residue at position 252 (K252) is an N6-succinyllysine; alternate. K279 and K318 each carry N6-acetyllysine. K357 bears the N6-(pyridoxal phosphate)lysine mark. T381 lines the pyridoxal 5'-phosphate pocket. At K413 the chain carries N6-acetyllysine; alternate. K413 is subject to N6-succinyllysine; alternate. Residues K452 and K470 each carry the N6-acetyllysine modification.

This sequence belongs to the class-III pyridoxal-phosphate-dependent aminotransferase family. In terms of assembly, homodimer; disulfide-linked. Pyridoxal 5'-phosphate is required as a cofactor. [2Fe-2S] cluster serves as cofactor. In terms of tissue distribution, liver &gt; pancreas &gt; brain &gt; kidney &gt; heart &gt; placenta.

It localises to the mitochondrion matrix. The catalysed reaction is 4-aminobutanoate + 2-oxoglutarate = succinate semialdehyde + L-glutamate. The enzyme catalyses (S)-3-amino-2-methylpropanoate + 2-oxoglutarate = 2-methyl-3-oxopropanoate + L-glutamate. In terms of biological role, catalyzes the conversion of gamma-aminobutyrate and L-beta-aminoisobutyrate to succinate semialdehyde and methylmalonate semialdehyde, respectively. Can also convert delta-aminovalerate and beta-alanine. The sequence is that of 4-aminobutyrate aminotransferase, mitochondrial from Homo sapiens (Human).